Here is a 299-residue protein sequence, read N- to C-terminus: Putative beta-glucosidase 2 (299 aa).

Residues 1–16 form the signal peptide; the sequence is MLHCITTIFLSISRMT. Residue 49–50 coordinates a beta-D-glucoside; that stretch reads NE. Glu-50 (proton donor) is an active-site residue. A disulfide bridge connects residues Cys-69 and Cys-72. Residues Asn-71 and Asn-76 are each glycosylated (N-linked (GlcNAc...) asparagine). Tyr-189 is an a beta-D-glucoside binding site. Asn-222 is a glycosylation site (N-linked (GlcNAc...) asparagine). Glu-255 provides a ligand contact to a beta-D-glucoside. Glu-255 serves as the catalytic Nucleophile. N-linked (GlcNAc...) asparagine glycosylation is present at Asn-290.

It belongs to the glycosyl hydrolase 1 family.

It carries out the reaction Hydrolysis of terminal, non-reducing beta-D-glucosyl residues with release of beta-D-glucose.. This chain is Putative beta-glucosidase 2, found in Arabidopsis thaliana (Mouse-ear cress).